A 514-amino-acid polypeptide reads, in one-letter code: CENP-B homolog protein 2 (514 aa).

The region spanning 70–145 (QIRRNRQGKY…KKRCLKHGLK (76 aa)) is the HTH CENPB-type domain. The DDE-1 domain maps to 172–384 (FDPKDIFNMD…FEPSIIYNCF (213 aa)).

The protein resides in the nucleus. It is found in the chromosome. Its subcellular location is the centromere. Binds to the central core and core-associated repeat regions of centromeric heterochromatin. The polypeptide is CENP-B homolog protein 2 (cbh2) (Schizosaccharomyces pombe (strain 972 / ATCC 24843) (Fission yeast)).